A 462-amino-acid chain; its full sequence is Elongation factor 1-alpha (462 aa).

At Gly2 the chain carries Blocked amino end (Gly). The tr-type G domain occupies 5–242 (KIHINIVVIG…DAILPPSRPT (238 aa)). The tract at residues 14–21 (GHVDSGKS) is G1. Position 14–21 (14–21 (GHVDSGKS)) interacts with GTP. N6,N6,N6-trimethyllysine is present on Lys36. Lys55 carries the post-translational modification N6-methyllysine. A G2 region spans residues 70 to 74 (GITID). Position 79 is an N6,N6,N6-trimethyllysine (Lys79). The G3 stretch occupies residues 91-94 (DAPG). GTP contacts are provided by residues 91-95 (DAPGH) and 153-156 (NKMD). The G4 stretch occupies residues 153–156 (NKMD). The G5 stretch occupies residues 194-196 (SGW). 2 positions are modified to N6,N6,N6-trimethyllysine: Lys219 and Lys318. Glu374 carries the 5-glutamyl glycerylphosphorylethanolamine modification.

Belongs to the TRAFAC class translation factor GTPase superfamily. Classic translation factor GTPase family. EF-Tu/EF-1A subfamily. The N-terminus is blocked.

It is found in the cytoplasm. This protein promotes the GTP-dependent binding of aminoacyl-tRNA to the A-site of ribosomes during protein biosynthesis. The sequence is that of Elongation factor 1-alpha from Artemia salina (Brine shrimp).